Consider the following 171-residue polypeptide: Regulator of ribonuclease activity A (171 aa).

It belongs to the RraA family. Homotrimer. Binds to both RNA-binding sites in the C-terminal region of Rne and to RhlB.

It is found in the cytoplasm. Globally modulates RNA abundance by binding to RNase E (Rne) and regulating its endonucleolytic activity. Can modulate Rne action in a substrate-dependent manner by altering the composition of the degradosome. Modulates RNA-binding and helicase activities of the degradosome. The sequence is that of Regulator of ribonuclease activity A from Vibrio cholerae serotype O1 (strain ATCC 39315 / El Tor Inaba N16961).